Reading from the N-terminus, the 214-residue chain is Thymidylate kinase (214 aa).

12 to 19 (GLDGSGKS) contacts ATP.

It belongs to the thymidylate kinase family.

The enzyme catalyses dTMP + ATP = dTDP + ADP. Its function is as follows. Phosphorylation of dTMP to form dTDP in both de novo and salvage pathways of dTTP synthesis. The protein is Thymidylate kinase of Bdellovibrio bacteriovorus (strain ATCC 15356 / DSM 50701 / NCIMB 9529 / HD100).